Consider the following 360-residue polypeptide: Cyclin-dependent kinase 7 (360 aa).

A Protein kinase domain is found at Tyr-4 to Phe-288. ATP is bound by residues Ile-10 to Val-18 and Lys-33. Asp-130 serves as the catalytic Proton acceptor. 2 positions are modified to phosphoserine: Ser-157 and Ser-163. Over residues Gln-333–Gln-342 the composition is skewed to low complexity. The disordered stretch occupies residues Gln-333–Val-360. Residues Asn-350 to Val-360 are compositionally biased toward polar residues.

It belongs to the protein kinase superfamily. CMGC Ser/Thr protein kinase family. CDC2/CDKX subfamily. As to quaternary structure, probably associates with cyclin H and mat1 to form a multimeric active enzyme.

It is found in the nucleus. The catalysed reaction is L-seryl-[protein] + ATP = O-phospho-L-seryl-[protein] + ADP + H(+). The enzyme catalyses L-threonyl-[protein] + ATP = O-phospho-L-threonyl-[protein] + ADP + H(+). It catalyses the reaction [DNA-directed RNA polymerase] + ATP = phospho-[DNA-directed RNA polymerase] + ADP + H(+). In terms of biological role, catalytic part of CAK which activates cyclin-associated CDK1/CDK2/CDK4 by threonine phosphorylation, thereby allowing MPF activation. The chain is Cyclin-dependent kinase 7 (cdk7) from Dictyostelium discoideum (Social amoeba).